The chain runs to 85 residues: Hepcidin (85 aa).

The signal sequence occupies residues Met-1–Ser-22. Positions Val-23–Leu-54 are excised as a propeptide. 4 cysteine pairs are disulfide-bonded: Cys-67–Cys-83, Cys-70–Cys-73, Cys-71–Cys-79, and Cys-74–Cys-82.

Belongs to the hepcidin family. In terms of assembly, interacts with SLC40A1; this interaction promotes SLC40A1 rapid ubiquitination.

It is found in the secreted. Liver-produced hormone that constitutes the main circulating regulator of iron absorption and distribution across tissues. Acts by promoting endocytosis and degradation of ferroportin/SLC40A1, leading to the retention of iron in iron-exporting cells and decreased flow of iron into plasma. Controls the major flows of iron into plasma: absorption of dietary iron in the intestine, recycling of iron by macrophages, which phagocytose old erythrocytes and other cells, and mobilization of stored iron from hepatocytes. In terms of biological role, has strong antimicrobial activity against E.coli ML35P N.cinerea and weaker against S.epidermidis, S.aureus and group b streptococcus bacteria. Active against the fungus C.albicans. No activity against P.aeruginosa. The protein is Hepcidin (HAMP) of Canis lupus familiaris (Dog).